The following is a 536-amino-acid chain: uncharacterized protein (536 aa).

Residues 1-8 are Cytoplasmic-facing; sequence MVSIKRYE. The chain crosses the membrane as a helical span at residues 9–29; it reads IISFVIAAFFFLSGLSMWIAF. Over 30-502 the chain is Extracellular; sequence WPIFNSELRS…VWLGVIIVPR (473 aa). N-linked (GlcNAc...) asparagine glycans are attached at residues asparagine 73, asparagine 236, asparagine 363, and asparagine 376. Residues 503 to 523 form a helical membrane-spanning segment; sequence IIEYLKFVLIFISICILTTLL. Residues 524-536 lie on the Cytoplasmic side of the membrane; the sequence is VIRVRVKGTVSVV.

This sequence belongs to the CD36 family.

It localises to the membrane. This is an uncharacterized protein from Caenorhabditis elegans.